The sequence spans 361 residues: Biotin synthase (361 aa).

A Radical SAM core domain is found at 47 to 278 (VHGDEVALCG…AAHIFVMGGR (232 aa)). [4Fe-4S] cluster contacts are provided by Cys65, Cys69, and Cys72. Ser110, Cys143, and Cys203 together coordinate [2Fe-2S] cluster. A disordered region spans residues 323–361 (TLRPPDTGKPWAFDGHAPSDADWNRKAAEPRPRPLPVVR). Over residues 339–354 (APSDADWNRKAAEPRP) the composition is skewed to basic and acidic residues.

This sequence belongs to the radical SAM superfamily. Biotin synthase family. Homodimer. [4Fe-4S] cluster is required as a cofactor. [2Fe-2S] cluster serves as cofactor.

It carries out the reaction (4R,5S)-dethiobiotin + (sulfur carrier)-SH + 2 reduced [2Fe-2S]-[ferredoxin] + 2 S-adenosyl-L-methionine = (sulfur carrier)-H + biotin + 2 5'-deoxyadenosine + 2 L-methionine + 2 oxidized [2Fe-2S]-[ferredoxin]. Its pathway is cofactor biosynthesis; biotin biosynthesis; biotin from 7,8-diaminononanoate: step 2/2. Functionally, catalyzes the conversion of dethiobiotin (DTB) to biotin by the insertion of a sulfur atom into dethiobiotin via a radical-based mechanism. This is Biotin synthase from Anaeromyxobacter sp. (strain K).